A 285-amino-acid chain; its full sequence is 3-methyl-2-oxobutanoate hydroxymethyltransferase 1 (285 aa).

Positions 49 and 88 each coordinate Mg(2+). 3-methyl-2-oxobutanoate contacts are provided by residues aspartate 49–serine 50, aspartate 88, and lysine 118. Glutamate 120 is a Mg(2+) binding site. Catalysis depends on glutamate 187, which acts as the Proton acceptor.

This sequence belongs to the PanB family. Homodecamer; pentamer of dimers. The cofactor is Mg(2+).

Its subcellular location is the cytoplasm. The enzyme catalyses 3-methyl-2-oxobutanoate + (6R)-5,10-methylene-5,6,7,8-tetrahydrofolate + H2O = 2-dehydropantoate + (6S)-5,6,7,8-tetrahydrofolate. It functions in the pathway cofactor biosynthesis; (R)-pantothenate biosynthesis; (R)-pantoate from 3-methyl-2-oxobutanoate: step 1/2. Catalyzes the reversible reaction in which hydroxymethyl group from 5,10-methylenetetrahydrofolate is transferred onto alpha-ketoisovalerate to form ketopantoate. This is 3-methyl-2-oxobutanoate hydroxymethyltransferase 1 from Burkholderia lata (strain ATCC 17760 / DSM 23089 / LMG 22485 / NCIMB 9086 / R18194 / 383).